The following is a 156-amino-acid chain: Aspartate carbamoyltransferase regulatory chain (156 aa).

Cys-109, Cys-114, Cys-140, and Cys-143 together coordinate Zn(2+).

It belongs to the PyrI family. As to quaternary structure, contains catalytic and regulatory chains. The cofactor is Zn(2+).

Functionally, involved in allosteric regulation of aspartate carbamoyltransferase. This Methanosarcina acetivorans (strain ATCC 35395 / DSM 2834 / JCM 12185 / C2A) protein is Aspartate carbamoyltransferase regulatory chain.